Reading from the N-terminus, the 205-residue chain is Holliday junction branch migration complex subunit RuvA (205 aa).

The domain I stretch occupies residues 1 to 64 (MIGKLKGVVD…EDMIRLYGFR (64 aa)). Residues 65–143 (SDAEREWFRL…AFAPVDPALV (79 aa)) are domain II. The tract at residues 144-152 (RLAGAVEAR) is flexible linker. Positions 153–205 (TAPQPVADAISALVNLGYPQAQASAAVAAALQSAGAEAEAKTLIRLGLRELAR) are domain III.

This sequence belongs to the RuvA family. Homotetramer. Forms an RuvA(8)-RuvB(12)-Holliday junction (HJ) complex. HJ DNA is sandwiched between 2 RuvA tetramers; dsDNA enters through RuvA and exits via RuvB. An RuvB hexamer assembles on each DNA strand where it exits the tetramer. Each RuvB hexamer is contacted by two RuvA subunits (via domain III) on 2 adjacent RuvB subunits; this complex drives branch migration. In the full resolvosome a probable DNA-RuvA(4)-RuvB(12)-RuvC(2) complex forms which resolves the HJ.

It is found in the cytoplasm. Its function is as follows. The RuvA-RuvB-RuvC complex processes Holliday junction (HJ) DNA during genetic recombination and DNA repair, while the RuvA-RuvB complex plays an important role in the rescue of blocked DNA replication forks via replication fork reversal (RFR). RuvA specifically binds to HJ cruciform DNA, conferring on it an open structure. The RuvB hexamer acts as an ATP-dependent pump, pulling dsDNA into and through the RuvAB complex. HJ branch migration allows RuvC to scan DNA until it finds its consensus sequence, where it cleaves and resolves the cruciform DNA. This chain is Holliday junction branch migration complex subunit RuvA, found in Methylobacterium sp. (strain 4-46).